Here is a 503-residue protein sequence, read N- to C-terminus: Glutamate--tRNA ligase (503 aa).

The 'HIGH' region signature appears at 12–22 (PSPTGYLHVGG). The short motif at 259–263 (KLSKR) is the 'KMSKS' region element. Residue Lys-262 participates in ATP binding.

It belongs to the class-I aminoacyl-tRNA synthetase family. Glutamate--tRNA ligase type 1 subfamily. As to quaternary structure, monomer.

The protein localises to the cytoplasm. It catalyses the reaction tRNA(Glu) + L-glutamate + ATP = L-glutamyl-tRNA(Glu) + AMP + diphosphate. Its function is as follows. Catalyzes the attachment of glutamate to tRNA(Glu) in a two-step reaction: glutamate is first activated by ATP to form Glu-AMP and then transferred to the acceptor end of tRNA(Glu). The chain is Glutamate--tRNA ligase from Chlorobaculum parvum (strain DSM 263 / NCIMB 8327) (Chlorobium vibrioforme subsp. thiosulfatophilum).